A 135-amino-acid chain; its full sequence is Phosphoribosyl-AMP cyclohydrolase (135 aa).

Mg(2+) is bound at residue Asp89. Cys90 is a Zn(2+) binding site. The Mg(2+) site is built by Asp91 and Asp93. Residues Cys106 and Cys113 each coordinate Zn(2+).

It belongs to the PRA-CH family. In terms of assembly, homodimer. The cofactor is Mg(2+). Zn(2+) serves as cofactor.

It is found in the cytoplasm. It carries out the reaction 1-(5-phospho-beta-D-ribosyl)-5'-AMP + H2O = 1-(5-phospho-beta-D-ribosyl)-5-[(5-phospho-beta-D-ribosylamino)methylideneamino]imidazole-4-carboxamide. It functions in the pathway amino-acid biosynthesis; L-histidine biosynthesis; L-histidine from 5-phospho-alpha-D-ribose 1-diphosphate: step 3/9. Catalyzes the hydrolysis of the adenine ring of phosphoribosyl-AMP. This Bifidobacterium adolescentis (strain ATCC 15703 / DSM 20083 / NCTC 11814 / E194a) protein is Phosphoribosyl-AMP cyclohydrolase.